We begin with the raw amino-acid sequence, 1356 residues long: DNA-directed RNA polymerase subunit beta (1356 aa).

The protein belongs to the RNA polymerase beta chain family. In terms of assembly, the RNAP catalytic core consists of 2 alpha, 1 beta, 1 beta' and 1 omega subunit. When a sigma factor is associated with the core the holoenzyme is formed, which can initiate transcription.

The catalysed reaction is RNA(n) + a ribonucleoside 5'-triphosphate = RNA(n+1) + diphosphate. Functionally, DNA-dependent RNA polymerase catalyzes the transcription of DNA into RNA using the four ribonucleoside triphosphates as substrates. The protein is DNA-directed RNA polymerase subunit beta of Caulobacter vibrioides (strain ATCC 19089 / CIP 103742 / CB 15) (Caulobacter crescentus).